The chain runs to 547 residues: Chaperonin GroEL (547 aa).

ATP is bound by residues 29 to 32, 86 to 90, glycine 413, 478 to 480, and aspartate 494; these read TLGP, DGTTT, and DVL.

This sequence belongs to the chaperonin (HSP60) family. In terms of assembly, forms a cylinder of 14 subunits composed of two heptameric rings stacked back-to-back. Interacts with the co-chaperonin GroES.

The protein localises to the cytoplasm. It catalyses the reaction ATP + H2O + a folded polypeptide = ADP + phosphate + an unfolded polypeptide.. Its function is as follows. Together with its co-chaperonin GroES, plays an essential role in assisting protein folding. The GroEL-GroES system forms a nano-cage that allows encapsulation of the non-native substrate proteins and provides a physical environment optimized to promote and accelerate protein folding. The chain is Chaperonin GroEL from Alkaliphilus metalliredigens (strain QYMF).